A 360-amino-acid polypeptide reads, in one-letter code: Phospho-N-acetylmuramoyl-pentapeptide-transferase (360 aa).

The next 10 helical transmembrane spans lie at 21-41 (YVTF…LWWG), 74-94 (MGGL…GDLG), 97-117 (YVWV…IDDY), 135-155 (LLQS…ADTA), 168-188 (VMPQ…VGSS), 199-219 (GLAI…AYLS), 236-256 (AGEL…FLWF), 263-283 (VFMG…IAVL), 288-308 (ILLV…ILQV), and 338-358 (VIVR…ATLK).

It belongs to the glycosyltransferase 4 family. MraY subfamily. Mg(2+) is required as a cofactor.

It localises to the cell inner membrane. It catalyses the reaction UDP-N-acetyl-alpha-D-muramoyl-L-alanyl-gamma-D-glutamyl-meso-2,6-diaminopimeloyl-D-alanyl-D-alanine + di-trans,octa-cis-undecaprenyl phosphate = di-trans,octa-cis-undecaprenyl diphospho-N-acetyl-alpha-D-muramoyl-L-alanyl-D-glutamyl-meso-2,6-diaminopimeloyl-D-alanyl-D-alanine + UMP. It participates in cell wall biogenesis; peptidoglycan biosynthesis. Its function is as follows. Catalyzes the initial step of the lipid cycle reactions in the biosynthesis of the cell wall peptidoglycan: transfers peptidoglycan precursor phospho-MurNAc-pentapeptide from UDP-MurNAc-pentapeptide onto the lipid carrier undecaprenyl phosphate, yielding undecaprenyl-pyrophosphoryl-MurNAc-pentapeptide, known as lipid I. This Shewanella piezotolerans (strain WP3 / JCM 13877) protein is Phospho-N-acetylmuramoyl-pentapeptide-transferase.